Here is a 316-residue protein sequence, read N- to C-terminus: Prenytransferase adrG (316 aa).

7 helical membrane-spanning segments follow: residues 36–56 (LLGFYLNTSPYLVGVAFCASI), 60–80 (KIPITVLLHRTILLSIWSIFL), 131–151 (VLIYLPWPCAVDCLIITFFAL), 163–183 (PQITLVNIGWAIPMAMHSLGL), 191–211 (PTVCMFLFIGLVIIMIDVIYS), 247–267 (GFLAMAGFFTGLGLSFFVVSV), and 294–314 (KSAFFLATLFWLFGFVIEYCL).

It belongs to the UbiA prenyltransferase family. Mg(2+) serves as cofactor.

The protein resides in the membrane. The enzyme catalyses 3,5-dimethylorsellinate + (2E,6E)-farnesyl diphosphate = (3R)-3-farnesyl-6-hydroxy-2,3,5-trimethyl-4-oxocyclohexa-1,5-diene-1-carboxylate + diphosphate + H(+). The protein operates within secondary metabolite biosynthesis; terpenoid biosynthesis. In terms of biological role, prenytransferase; part of the gene cluster that mediates the biosynthesis of andrastins, meroterpenoid compounds that exhibit inhibitory activity against ras farnesyltransferase, suggesting that they could be promising leads for antitumor agents. The first step of the pathway is the synthesis of 3,5-dimethylorsellinic acid (DMOA) by the polyketide synthase adrD via condensation of one acetyl-CoA starter unit with 3 malonyl-CoA units and 2 methylations. DMAO is then converted to farnesyl-DMAO by the prenyltransferase adrG. The methyltransferase adrK catalyzes the methylation of the carboxyl group of farnesyl-DMAO to farnesyl-DMAO methyl ester which is further converted to epoxyfarnesyl-DMAO methyl ester by the FAD-dependent monooxygenase adrH. The terpene cyclase adrI then catalyzes the carbon skeletal rearrangement to generate the andrastin E, the first compound in the pathway having the andrastin scaffold, with the tetracyclic ring system. The post-cyclization tailoring enzymes adrF, adrE, adrJ, and adrA, are involved in the conversion of andrastin E into andrastin A. The short chain dehydrogenase adrF is responsible for the oxidation of the C-3 a hydroxyl group of andrastin E to yield the corresponding ketone, andrastin D. The ketoreductase adrE stereoselectively reduces the carbonyl moiety to reverse the stereochemistry of the C-3 position to yield andrastin F. The acetyltransferase adrJ is the acetyltransferase that attaches the acetyl group to the C-3 hydroxyl group of andrastin F to yield andrastin C. Finally, the cytochrome P450 monooxygenase adrA catalyzes two sequential oxidation reactions of the C-23 methyl group, to generate the corresponding alcohol andrastin B, and aldehyde andrastin A. The sequence is that of Prenytransferase adrG from Penicillium roqueforti.